We begin with the raw amino-acid sequence, 256 residues long: Thiazole synthase (256 aa).

The active-site Schiff-base intermediate with DXP is Lys-96. 1-deoxy-D-xylulose 5-phosphate-binding positions include Gly-157, 184–185 (AG), and 206–207 (NT).

This sequence belongs to the ThiG family. Homotetramer. Forms heterodimers with either ThiH or ThiS.

It is found in the cytoplasm. It carries out the reaction [ThiS sulfur-carrier protein]-C-terminal-Gly-aminoethanethioate + 2-iminoacetate + 1-deoxy-D-xylulose 5-phosphate = [ThiS sulfur-carrier protein]-C-terminal Gly-Gly + 2-[(2R,5Z)-2-carboxy-4-methylthiazol-5(2H)-ylidene]ethyl phosphate + 2 H2O + H(+). The protein operates within cofactor biosynthesis; thiamine diphosphate biosynthesis. Its function is as follows. Catalyzes the rearrangement of 1-deoxy-D-xylulose 5-phosphate (DXP) to produce the thiazole phosphate moiety of thiamine. Sulfur is provided by the thiocarboxylate moiety of the carrier protein ThiS. In vitro, sulfur can be provided by H(2)S. The sequence is that of Thiazole synthase from Brucella anthropi (strain ATCC 49188 / DSM 6882 / CCUG 24695 / JCM 21032 / LMG 3331 / NBRC 15819 / NCTC 12168 / Alc 37) (Ochrobactrum anthropi).